A 210-amino-acid chain; its full sequence is uncharacterized protein (210 aa).

This is an uncharacterized protein from Sulfolobus islandicus filamentous virus (isolate Iceland/Hveragerdi) (SIFV).